A 497-amino-acid chain; its full sequence is Paired box protein Pax-2-A (497 aa).

The paired DNA-binding region spans 16 to 142; sequence GHGGVNQLGG…SSINRIIRTK (127 aa). Residues 19 to 75 are PAI subdomain; the sequence is GVNQLGGVFVNGRPLPDVVRQRIVELAHQGVRPCDISRQLRVSHGCVSKILGRYYET. The tract at residues 94 to 142 is RED subdomain; sequence KVVDKIAEYKRQNPTMFAWEIRDRLLAEGICDNDTVPSVSSINRIIRTK. The interval 143–224 is disordered; it reads VQQPFHPTPD…GDSQSSVESL (82 aa). Positions 166 to 178 are enriched in low complexity; the sequence is VPSTASPPVSSAS.

Expression becomes spatially localized at mid-gastrula stages and is confined to the nervous system (midbrain, hindbrain, spinal cord), sensory organs (optic vesicle and stalk, otic vesicle), visceral arches, developing excretory system (pronephros, pronephric duct, rectal diverticulum, proctodaeum) and thyroid gland. Splicing does not appear to be tissue-specific and tissues displayed the same spectrum of splice variants.

It localises to the nucleus. In terms of biological role, probable transcription factor. Involved in kidney development, acting synergistically with lhx1/lim-1 in pronephric morphogenesis during the tailbud stages. The protein is Paired box protein Pax-2-A (pax2-a) of Xenopus laevis (African clawed frog).